The sequence spans 172 residues: Peptide deformylase-like (172 aa).

Residue E134 is part of the active site.

The protein belongs to the polypeptide deformylase family.

The chain is Peptide deformylase-like from Rhizobium meliloti (strain 1021) (Ensifer meliloti).